The following is a 336-amino-acid chain: tRNA-modifying protein YgfZ (336 aa).

Folate is bound by residues W28 and W191.

It belongs to the tRNA-modifying YgfZ family.

Its subcellular location is the cytoplasm. In terms of biological role, folate-binding protein involved in regulating the level of ATP-DnaA and in the modification of some tRNAs. It is probably a key factor in regulatory networks that act via tRNA modification, such as initiation of chromosomal replication. This Hamiltonella defensa subsp. Acyrthosiphon pisum (strain 5AT) protein is tRNA-modifying protein YgfZ.